The chain runs to 368 residues: Phospho-N-acetylmuramoyl-pentapeptide-transferase (368 aa).

9 helical membrane-spanning segments follow: residues 2 to 22 (IALI…TPLL), 51 to 71 (TLGG…SALY), 80 to 100 (PSWS…LGFI), 117 to 137 (GGKF…ALLI), 167 to 187 (VAII…TNAV), 193 to 213 (LDGL…IIAF), 234 to 254 (PLDL…FLWY), 271 to 291 (LGGL…AVVL), and 340 to 360 (FWMI…GDWV).

The protein belongs to the glycosyltransferase 4 family. MraY subfamily. Requires Mg(2+) as cofactor.

It localises to the cell membrane. It catalyses the reaction UDP-N-acetyl-alpha-D-muramoyl-L-alanyl-gamma-D-glutamyl-meso-2,6-diaminopimeloyl-D-alanyl-D-alanine + di-trans,octa-cis-undecaprenyl phosphate = di-trans,octa-cis-undecaprenyl diphospho-N-acetyl-alpha-D-muramoyl-L-alanyl-D-glutamyl-meso-2,6-diaminopimeloyl-D-alanyl-D-alanine + UMP. It functions in the pathway cell wall biogenesis; peptidoglycan biosynthesis. Its function is as follows. Catalyzes the initial step of the lipid cycle reactions in the biosynthesis of the cell wall peptidoglycan: transfers peptidoglycan precursor phospho-MurNAc-pentapeptide from UDP-MurNAc-pentapeptide onto the lipid carrier undecaprenyl phosphate, yielding undecaprenyl-pyrophosphoryl-MurNAc-pentapeptide, known as lipid I. The chain is Phospho-N-acetylmuramoyl-pentapeptide-transferase from Bifidobacterium longum (strain DJO10A).